A 133-amino-acid polypeptide reads, in one-letter code: uncharacterized protein (133 aa).

It belongs to the mimivirus L87/L94 family.

This is an uncharacterized protein from Acanthamoeba polyphaga mimivirus (APMV).